The following is a 728-amino-acid chain: Myb-related protein A (728 aa).

The tract at residues 1-31 (MAGRARSEDEEEDGQFTEHDYDVSLQKGPKK) is disordered. 3 HTH myb-type domains span residues 30 to 80 (KKPW…HKVL), 81 to 136 (SPEL…NPDV), and 137 to 187 (KKSS…KRKV). 3 consecutive DNA-binding regions (H-T-H motif) follow at residues 57 to 80 (WGVV…HKVL), 109 to 132 (WSII…HNHL), and 160 to 183 (WAEI…NSTM). Residues 230–293 (IPRYSSLSHD…RKRVPSGSSL (64 aa)) form a transcriptional activation domain region. The segment at 296 to 534 (SESYHMGESM…IRRSLMAVTP (239 aa)) is negative regulatory domain.

As to quaternary structure, component of the DREAM complex.

It is found in the nucleus. Functionally, transcription factor that specifically recognizes the sequence 5'-YAAC[GT]G-3'. Acts as a master regulator of male meiosis by promoting expression of piRNAs. The piRNA metabolic process mediates the repression of transposable elements during meiosis by forming complexes composed of piRNAs and Piwi proteins and governs the methylation and subsequent repression of transposons, which is essential for the germline integrity. In Xenopus laevis (African clawed frog), this protein is Myb-related protein A (mybl1).